The primary structure comprises 531 residues: MSYVTRWLFSTSHKDIGILYLIYGMVSAMVATGMSVIIRLELSGPGPMFLHGNNQVFNVLVTGHAIAMIFLFVMPILIGSFGNYFLPIMIGAVDMAFARLNNISFWCLPPALVCVIASVLIETGAGTGWTVYPPLSSISAHSGPSVDLAIFAIHLTSISSLLGAINFIVTTLNMRSIGIHMIDMPLFVWAIFFTAILLLLSLPVLTAGVTLLLMDRNFNTGFYEVAAGGDPILYEHLFYFFGHPEVYIIIIPGFGIISHVISTYTKKPIFGQIGMIYAIGSIGLLGFLVWSHHMYVVGLDIDSRAYFTSATMVIAIPTGIKIFSWLATLYGGELRLAVPMLFALGFLFLFTIGGLTGVMLSNASIDVAFHDTYYVVGHFHYVLSMGALFSLIAGYYYWGPAMFGLKYNKVLAEVHYWLLFVSVNIIFLPMHFLGLNGMPRRIPQYPDAFVGWNVVSSWGSIMSVISVLIGLYSVLVQLTNGENEREEIQVTPDYLESNNTRDVRDSDLELITSRPAQYHTFSELPILIQQI.

A helical membrane pass occupies residues 18–38 (ILYLIYGMVSAMVATGMSVII). Ca(2+)-binding residues include E41 and G46. Transmembrane regions (helical) follow at residues 59–79 (VLVT…ILIG), 103–123 (ISFW…LIET), 149–169 (AIFA…NFIV), 185–205 (PLFV…LPVL), 237–257 (LFYF…FGII), and 269–289 (IFGQ…GFLV). H64 serves as a coordination point for Fe(II)-heme a. H243 provides a ligand contact to Cu cation. The segment at residues 243–247 (HPEVY) is a cross-link (1'-histidyl-3'-tyrosine (His-Tyr)). Residue Y247 coordinates O2. Cu cation-binding residues include H292 and H293. The next 2 helical transmembrane spans lie at 312 to 332 (MVIA…LYGG) and 340 to 360 (MLFA…GVML). Mg(2+) contacts are provided by H370 and D371. H378 is a heme a3 binding site. H380 contributes to the Fe(II)-heme a binding site. The next 2 helical transmembrane spans lie at 385 to 405 (MGAL…MFGL) and 414 to 434 (VHYW…HFLG). Residue P443 coordinates Ca(2+). Residues 458–478 (WGSIMSVISVLIGLYSVLVQL) form a helical membrane-spanning segment.

Belongs to the heme-copper respiratory oxidase family. In terms of assembly, component of the cytochrome c oxidase (complex IV, CIV), a multisubunit enzyme composed of a catalytic core of 3 subunits and several supernumerary subunits. The complex exists as a monomer or a dimer and forms supercomplexes (SCs) in the inner mitochondrial membrane with ubiquinol-cytochrome c oxidoreductase (cytochrome b-c1 complex, complex III, CIII). Heme is required as a cofactor. The cofactor is Cu cation.

The protein resides in the mitochondrion inner membrane. The enzyme catalyses 4 Fe(II)-[cytochrome c] + O2 + 8 H(+)(in) = 4 Fe(III)-[cytochrome c] + 2 H2O + 4 H(+)(out). It functions in the pathway energy metabolism; oxidative phosphorylation. Its function is as follows. Component of the cytochrome c oxidase, the last enzyme in the mitochondrial electron transport chain which drives oxidative phosphorylation. The respiratory chain contains 3 multisubunit complexes succinate dehydrogenase (complex II, CII), ubiquinol-cytochrome c oxidoreductase (cytochrome b-c1 complex, complex III, CIII) and cytochrome c oxidase (complex IV, CIV), that cooperate to transfer electrons derived from NADH and succinate to molecular oxygen, creating an electrochemical gradient over the inner membrane that drives transmembrane transport and the ATP synthase. Cytochrome c oxidase is the component of the respiratory chain that catalyzes the reduction of oxygen to water. Electrons originating from reduced cytochrome c in the intermembrane space (IMS) are transferred via the dinuclear copper A center (CU(A)) of subunit 2 and heme A of subunit 1 to the active site in subunit 1, a binuclear center (BNC) formed by heme A3 and copper B (CU(B)). The BNC reduces molecular oxygen to 2 water molecules using 4 electrons from cytochrome c in the IMS and 4 protons from the mitochondrial matrix. In Candida albicans (strain SC5314 / ATCC MYA-2876) (Yeast), this protein is Cytochrome c oxidase subunit 1 (COX1).